Here is a 707-residue protein sequence, read N- to C-terminus: Serine/threonine protein kinase UL97 (707 aa).

Over residues Met-1–Leu-14 the composition is skewed to low complexity. 4 disordered regions span residues Met-1 to Arg-33, Asp-113 to Tyr-146, Phe-176 to Arg-198, and Glu-231 to Ser-264. A compositionally biased stretch (basic and acidic residues) spans Asp-113–Arg-127. Low complexity predominate over residues Gly-178–Gly-188. ATP contacts are provided by residues Leu-337–Val-345 and Lys-359. Residue Asp-456 is the Proton acceptor of the active site.

This sequence belongs to the protein kinase superfamily. Tyr protein kinase family. HCMV ganciclovir subfamily. Interacts with UL83. Post-translationally, autophosphorylates on serine and threonine residues.

Its subcellular location is the virion. It catalyses the reaction L-seryl-[protein] + ATP = O-phospho-L-seryl-[protein] + ADP + H(+). The catalysed reaction is L-threonyl-[protein] + ATP = O-phospho-L-threonyl-[protein] + ADP + H(+). Its function is as follows. Serine/threonine protein kinase that plays important roles in several processes including nuclear viral egress, viral replication or regulation of host cell cycle progression. Participates in the acquisition of tegument during virion morphogenesis in the nucleus. Phosphorylates the viral nuclear egress complex (NEC) subunits UL50 and UL53. Redistributes the host nuclear lamina by phosphorylating cellular Lamins-A/C. Plays a role in viral DNA synthesis by phosphorylating the DNA polymerase processivity factor UL44. Stimulates host cell cycle to support viral DNA synthesis by phosphorylating host retinoblastoma/RB1 protein. Additional substrates have been identified including host EF1D or H2B. Also phosphorylates host SAMHD1 and thereby counteracts its antiviral effect by reducing its dNTP hydrolase activity. This chain is Serine/threonine protein kinase UL97 (UL97), found in Human cytomegalovirus (strain AD169) (HHV-5).